Consider the following 193-residue polypeptide: Peptidyl-tRNA hydrolase (193 aa).

Tyr16 lines the tRNA pocket. Catalysis depends on His21, which acts as the Proton acceptor. TRNA is bound by residues Phe67, Asn69, and Asn115.

Belongs to the PTH family. As to quaternary structure, monomer.

It is found in the cytoplasm. It catalyses the reaction an N-acyl-L-alpha-aminoacyl-tRNA + H2O = an N-acyl-L-amino acid + a tRNA + H(+). Hydrolyzes ribosome-free peptidyl-tRNAs (with 1 or more amino acids incorporated), which drop off the ribosome during protein synthesis, or as a result of ribosome stalling. In terms of biological role, catalyzes the release of premature peptidyl moieties from peptidyl-tRNA molecules trapped in stalled 50S ribosomal subunits, and thus maintains levels of free tRNAs and 50S ribosomes. This chain is Peptidyl-tRNA hydrolase, found in Psychrobacter arcticus (strain DSM 17307 / VKM B-2377 / 273-4).